Here is a 203-residue protein sequence, read N- to C-terminus: LexA repressor 2 (203 aa).

The H-T-H motif DNA-binding region spans 28 to 48; that stretch reads MREIARHLNVNGTLGVAKHLE. Catalysis depends on for autocatalytic cleavage activity residues Ser122 and Lys159.

This sequence belongs to the peptidase S24 family. In terms of assembly, homodimer.

The catalysed reaction is Hydrolysis of Ala-|-Gly bond in repressor LexA.. Functionally, represses a number of genes involved in the response to DNA damage (SOS response), including recA and lexA. In the presence of single-stranded DNA, RecA interacts with LexA causing an autocatalytic cleavage which disrupts the DNA-binding part of LexA, leading to derepression of the SOS regulon and eventually DNA repair. The polypeptide is LexA repressor 2 (Geobacter sulfurreducens (strain ATCC 51573 / DSM 12127 / PCA)).